A 503-amino-acid polypeptide reads, in one-letter code: MKEYQVYLERARSRQQDFLYPLLFREYIYGLAYSHNLNRSIFLENVGYDNKYSLLIVKRLITRMYQQNHLIISANDSTKNPFWGYNKNLDSQIISEGFAIVVEIPFLRQLSSSLEEAEILQSYQNWRSIHSIFPFLEDKLTYLNYVSDIRIPYPIHLEILVQILRYWVKDAPFFHLLRLFLYNFSNWNSFLTTKKSISTFSKRNPRLFLFLHNFYVCEYEYIFVFLRTKSSHLRLKSFSVFFERIFFDAKREHLVKVFSKDFSYTLTFFKDPNIHYVRYQGKCILASKNVPFLMNKWKHYFIHLWQCFFDVWPQPRMININPLSEHSFQLLGYFLNVRLNRSVVRSQMLQNTFLIEIGIKKLDIIVPILPLIRSLAKAKFXBILGEPISKPVWADSSDFDIIDRFLRICRNLSHYYNGSSKKKSLYRIKYILRLSCIKTLACKHKSTVRAFLKRSGSEELLQEFFTEEXXILSLIFPXBSSTLQRNRIWYLDILFSNDLVHDE.

It belongs to the intron maturase 2 family. MatK subfamily.

It is found in the plastid. It localises to the chloroplast. Its function is as follows. Usually encoded in the trnK tRNA gene intron. Probably assists in splicing its own and other chloroplast group II introns. This Lathyrus vestitus (Pacific pea) protein is Maturase K.